Here is a 163-residue protein sequence, read N- to C-terminus: Nucleotide-binding protein MUL_0671 (163 aa).

This sequence belongs to the YajQ family.

Nucleotide-binding protein. This Mycobacterium ulcerans (strain Agy99) protein is Nucleotide-binding protein MUL_0671.